A 454-amino-acid polypeptide reads, in one-letter code: tRNA modification GTPase MnmE (454 aa).

Positions 26, 84, and 123 each coordinate (6S)-5-formyl-5,6,7,8-tetrahydrofolate. A TrmE-type G domain is found at 219–378; that stretch reads GLQVVIAGKP…LVDAITAHAG (160 aa). Asparagine 229 is a K(+) binding site. GTP contacts are provided by residues 229-234, 248-254, and 273-276; these read NAGKSS, TDIAGTT, and DTAG. A Mg(2+)-binding site is contributed by serine 233. Threonine 248, isoleucine 250, and threonine 253 together coordinate K(+). Threonine 254 contributes to the Mg(2+) binding site. Lysine 454 provides a ligand contact to (6S)-5-formyl-5,6,7,8-tetrahydrofolate.

Belongs to the TRAFAC class TrmE-Era-EngA-EngB-Septin-like GTPase superfamily. TrmE GTPase family. As to quaternary structure, homodimer. Heterotetramer of two MnmE and two MnmG subunits. K(+) is required as a cofactor.

It localises to the cytoplasm. Its function is as follows. Exhibits a very high intrinsic GTPase hydrolysis rate. Involved in the addition of a carboxymethylaminomethyl (cmnm) group at the wobble position (U34) of certain tRNAs, forming tRNA-cmnm(5)s(2)U34. The polypeptide is tRNA modification GTPase MnmE (Acinetobacter baumannii (strain AYE)).